Here is a 453-residue protein sequence, read N- to C-terminus: Bifunctional protein GlmU (453 aa).

The segment at 1 to 227 is pyrophosphorylase; sequence MNKLSVVILA…LMEVEGVNNR (227 aa). UDP-N-acetyl-alpha-D-glucosamine contacts are provided by residues 9 to 12, lysine 23, glutamine 74, 79 to 80, 101 to 103, glycine 138, glutamate 152, asparagine 167, and asparagine 225; these read LAAG, GT, and YGD. Aspartate 103 is a binding site for Mg(2+). Asparagine 225 lines the Mg(2+) pocket. The linker stretch occupies residues 228 to 248; the sequence is LQLANLERHYQRKQVEKLLLA. The N-acetyltransferase stretch occupies residues 249 to 453; sequence GVTFADPARF…ISNWQRPKRK (205 aa). UDP-N-acetyl-alpha-D-glucosamine-binding residues include arginine 331 and lysine 349. Histidine 361 (proton acceptor) is an active-site residue. 2 residues coordinate UDP-N-acetyl-alpha-D-glucosamine: tyrosine 364 and asparagine 375. Acetyl-CoA-binding positions include alanine 378, 384-385, serine 403, alanine 421, and arginine 438; that span reads NY.

In the N-terminal section; belongs to the N-acetylglucosamine-1-phosphate uridyltransferase family. The protein in the C-terminal section; belongs to the transferase hexapeptide repeat family. In terms of assembly, homotrimer. Mg(2+) serves as cofactor.

The protein resides in the cytoplasm. The catalysed reaction is alpha-D-glucosamine 1-phosphate + acetyl-CoA = N-acetyl-alpha-D-glucosamine 1-phosphate + CoA + H(+). It carries out the reaction N-acetyl-alpha-D-glucosamine 1-phosphate + UTP + H(+) = UDP-N-acetyl-alpha-D-glucosamine + diphosphate. Its pathway is nucleotide-sugar biosynthesis; UDP-N-acetyl-alpha-D-glucosamine biosynthesis; N-acetyl-alpha-D-glucosamine 1-phosphate from alpha-D-glucosamine 6-phosphate (route II): step 2/2. It participates in nucleotide-sugar biosynthesis; UDP-N-acetyl-alpha-D-glucosamine biosynthesis; UDP-N-acetyl-alpha-D-glucosamine from N-acetyl-alpha-D-glucosamine 1-phosphate: step 1/1. The protein operates within bacterial outer membrane biogenesis; LPS lipid A biosynthesis. In terms of biological role, catalyzes the last two sequential reactions in the de novo biosynthetic pathway for UDP-N-acetylglucosamine (UDP-GlcNAc). The C-terminal domain catalyzes the transfer of acetyl group from acetyl coenzyme A to glucosamine-1-phosphate (GlcN-1-P) to produce N-acetylglucosamine-1-phosphate (GlcNAc-1-P), which is converted into UDP-GlcNAc by the transfer of uridine 5-monophosphate (from uridine 5-triphosphate), a reaction catalyzed by the N-terminal domain. This is Bifunctional protein GlmU from Histophilus somni (strain 2336) (Haemophilus somnus).